We begin with the raw amino-acid sequence, 303 residues long: tRNA pseudouridine synthase B (303 aa).

D47 acts as the Nucleophile in catalysis.

Belongs to the pseudouridine synthase TruB family. Type 1 subfamily.

It catalyses the reaction uridine(55) in tRNA = pseudouridine(55) in tRNA. Its function is as follows. Responsible for synthesis of pseudouridine from uracil-55 in the psi GC loop of transfer RNAs. The protein is tRNA pseudouridine synthase B of Roseobacter denitrificans (strain ATCC 33942 / OCh 114) (Erythrobacter sp. (strain OCh 114)).